Reading from the N-terminus, the 413-residue chain is CinA-like protein (413 aa).

Belongs to the CinA family.

In Desulfosudis oleivorans (strain DSM 6200 / JCM 39069 / Hxd3) (Desulfococcus oleovorans), this protein is CinA-like protein.